The chain runs to 385 residues: Glutamate 5-kinase (385 aa).

Lys17 serves as a coordination point for ATP. Substrate contacts are provided by Ser64, Asp151, and Asn165. 185–186 lines the ATP pocket; sequence SD. Residues 291–367 enclose the PUA domain; the sequence is SGTVRVDAGA…DQIENVLGYS (77 aa).

It belongs to the glutamate 5-kinase family.

The protein localises to the cytoplasm. The catalysed reaction is L-glutamate + ATP = L-glutamyl 5-phosphate + ADP. It participates in amino-acid biosynthesis; L-proline biosynthesis; L-glutamate 5-semialdehyde from L-glutamate: step 1/2. In terms of biological role, catalyzes the transfer of a phosphate group to glutamate to form L-glutamate 5-phosphate. In Methanosarcina mazei (strain ATCC BAA-159 / DSM 3647 / Goe1 / Go1 / JCM 11833 / OCM 88) (Methanosarcina frisia), this protein is Glutamate 5-kinase.